Consider the following 176-residue polypeptide: Probable inosine/xanthosine triphosphatase (176 aa).

Asp36 serves as a coordination point for Mg(2+).

Belongs to the YjjX NTPase family. As to quaternary structure, homodimer. Requires Mg(2+) as cofactor. It depends on Mn(2+) as a cofactor.

The enzyme catalyses XTP + H2O = XDP + phosphate + H(+). It catalyses the reaction ITP + H2O = IDP + phosphate + H(+). In terms of biological role, phosphatase that hydrolyzes non-canonical purine nucleotides such as XTP and ITP to their respective diphosphate derivatives. Probably excludes non-canonical purines from DNA/RNA precursor pool, thus preventing their incorporation into DNA/RNA and avoiding chromosomal lesions. The polypeptide is Probable inosine/xanthosine triphosphatase (Saccharolobus islandicus (strain M.16.4 / Kamchatka #3) (Sulfolobus islandicus)).